A 434-amino-acid chain; its full sequence is ATP-dependent protease ATPase subunit HslU (434 aa).

ATP contacts are provided by residues Ile18, 60 to 65 (GVGKTE), Asp247, Glu312, and Arg384.

Belongs to the ClpX chaperone family. HslU subfamily. As to quaternary structure, a double ring-shaped homohexamer of HslV is capped on each side by a ring-shaped HslU homohexamer. The assembly of the HslU/HslV complex is dependent on binding of ATP.

It is found in the cytoplasm. ATPase subunit of a proteasome-like degradation complex; this subunit has chaperone activity. The binding of ATP and its subsequent hydrolysis by HslU are essential for unfolding of protein substrates subsequently hydrolyzed by HslV. HslU recognizes the N-terminal part of its protein substrates and unfolds these before they are guided to HslV for hydrolysis. This chain is ATP-dependent protease ATPase subunit HslU, found in Brucella ovis (strain ATCC 25840 / 63/290 / NCTC 10512).